The following is a 508-amino-acid chain: GMP synthase [glutamine-hydrolyzing] (508 aa).

The 189-residue stretch at 1 to 189 (MILVLDFGSQ…ALLVCGCEKT (189 aa)) folds into the Glutamine amidotransferase type-1 domain. Cys78 (nucleophile) is an active-site residue. Residues His163 and Glu165 contribute to the active site. A GMPS ATP-PPase domain is found at 190-383 (WGMQHFAQRE…LGVSQDFLMR (194 aa)). 217 to 223 (SGGVDST) lines the ATP pocket.

Homodimer.

The catalysed reaction is XMP + L-glutamine + ATP + H2O = GMP + L-glutamate + AMP + diphosphate + 2 H(+). Its pathway is purine metabolism; GMP biosynthesis; GMP from XMP (L-Gln route): step 1/1. Catalyzes the synthesis of GMP from XMP. This Helicobacter pylori (strain P12) protein is GMP synthase [glutamine-hydrolyzing].